The chain runs to 678 residues: NADPH--cytochrome P450 reductase (678 aa).

Glycine 2 bears the N-acetylglycine mark. The Lumenal portion of the chain corresponds to 2-22 (GDSHEDTSATMPEAVAEEVSL). Residues 23 to 43 (FSTTDMVLFSLIVGVLTYWFI) traverse the membrane as a helical segment. At 44–678 (FRKKKEEIPE…KGRYSLDVWS (635 aa)) the chain is on the cytoplasmic side. A Flavodoxin-like domain is found at 80–224 (IIVFYGSQTG…DFITWREQFW (145 aa)). FMN is bound by residues 86 to 91 (SQTGTA), 138 to 141 (ATYG), 173 to 182 (LGNKTYEHFN), and aspartate 208. Residues 279–521 (KNPFLAAVTA…FVRKSQFRLP (243 aa)) enclose the FAD-binding FR-type domain. Arginine 298 serves as a coordination point for NADP(+). FAD contacts are provided by residues arginine 424, 454–457 (RYYS), 472–474 (CAV), tyrosine 478, and 488–491 (GVAT). NADP(+) contacts are provided by residues threonine 535, 596–597 (SR), 602–606 (KVYVQ), and aspartate 639. Tryptophan 677 provides a ligand contact to FAD.

Belongs to the NADPH--cytochrome P450 reductase family. This sequence in the N-terminal section; belongs to the flavodoxin family. The protein in the C-terminal section; belongs to the flavoprotein pyridine nucleotide cytochrome reductase family. It depends on FAD as a cofactor. Requires FMN as cofactor.

The protein resides in the endoplasmic reticulum membrane. It carries out the reaction 2 oxidized [cytochrome P450] + NADPH = 2 reduced [cytochrome P450] + NADP(+) + H(+). In terms of biological role, this enzyme is required for electron transfer from NADP to cytochrome P450 in microsomes. It can also provide electron transfer to heme oxygenase and cytochrome B5. The protein is NADPH--cytochrome P450 reductase of Rattus norvegicus (Rat).